The sequence spans 518 residues: Glucan 1,4-alpha-maltohexaosidase (518 aa).

A signal peptide spans 1–33; that stretch reads MKMRTGKKGFLSILLAFLLVITSIPFTLVDVEA. Ca(2+)-binding residues include Asn-139, Asp-196, Ala-219, Asp-221, Asp-232, Asp-238, Asp-240, and Asp-242. Asp-196 contacts Na(+). 3 residues coordinate Na(+): Asp-221, Asp-232, and Asp-238. The Nucleophile role is filled by Asp-269. His-273 contacts Ca(2+). The active-site Proton donor is the Glu-299.

The protein belongs to the glycosyl hydrolase 13 family. It depends on Ca(2+) as a cofactor. Na(+) serves as cofactor.

It localises to the secreted. It catalyses the reaction Hydrolysis of (1-&gt;4)-alpha-D-glucosidic linkages in amylaceous polysaccharides, to remove successive maltohexaose residues from the non-reducing chain ends.. The protein operates within glycan degradation; starch degradation. The sequence is that of Glucan 1,4-alpha-maltohexaosidase from Bacillus sp. (strain 707).